Here is a 186-residue protein sequence, read N- to C-terminus: Dynactin subunit 3 (186 aa).

Ala2 is subject to N-acetylalanine.

Belongs to the dynactin subunit 3 family. As to quaternary structure, subunit of dynactin, a multiprotein complex part of a tripartite complex with dynein and a adapter, such as BICDL1, BICD2 or HOOK3. The dynactin complex is built around ACTR1A/ACTB filament and consists of an actin-related filament composed of a shoulder domain, a pointed end and a barbed end. Its length is defined by its flexible shoulder domain. The soulder is composed of 2 DCTN1 subunits, 4 DCTN2 and 2 DCTN3. The 4 DCNT2 (via N-terminus) bind the ACTR1A filament and act as molecular rulers to determine the length. The pointed end is important for binding dynein-dynactin cargo adapters. Consists of 4 subunits: ACTR10, DCNT4, DCTN5 and DCTN6. The barbed end is composed of a CAPZA1:CAPZB heterodimers, which binds ACTR1A/ACTB filament and dynactin and stabilizes dynactin.

The protein resides in the cytoplasm. It localises to the cytoskeleton. The protein localises to the microtubule organizing center. Its subcellular location is the centrosome. It is found in the chromosome. The protein resides in the centromere. It localises to the kinetochore. The protein localises to the spindle. Its subcellular location is the cleavage furrow. It is found in the midbody. In terms of biological role, part of the dynactin complex that activates the molecular motor dynein for ultra-processive transport along microtubules. Together with dynein is involved in spindle assembly and cytokinesis. The polypeptide is Dynactin subunit 3 (Sus scrofa (Pig)).